The sequence spans 60 residues: Large ribosomal subunit protein bL32 (60 aa).

It belongs to the bacterial ribosomal protein bL32 family.

This Streptococcus pneumoniae serotype 4 (strain ATCC BAA-334 / TIGR4) protein is Large ribosomal subunit protein bL32.